The chain runs to 581 residues: Arginine--tRNA ligase (581 aa).

Residues 126-136 (PNLAKEMHVGH) carry the 'HIGH' region motif.

The protein belongs to the class-I aminoacyl-tRNA synthetase family. As to quaternary structure, monomer.

The protein localises to the cytoplasm. It carries out the reaction tRNA(Arg) + L-arginine + ATP = L-arginyl-tRNA(Arg) + AMP + diphosphate. In Shewanella sp. (strain MR-4), this protein is Arginine--tRNA ligase.